Reading from the N-terminus, the 609-residue chain is Dihydroxy-acid dehydratase (609 aa).

D81 contributes to the Mg(2+) binding site. A [2Fe-2S] cluster-binding site is contributed by C122. Mg(2+) contacts are provided by D123 and K124. K124 is subject to N6-carboxylysine. Residue C195 coordinates [2Fe-2S] cluster. Position 491 (E491) interacts with Mg(2+). S517 serves as the catalytic Proton acceptor.

It belongs to the IlvD/Edd family. Homodimer. [2Fe-2S] cluster is required as a cofactor. The cofactor is Mg(2+).

It carries out the reaction (2R)-2,3-dihydroxy-3-methylbutanoate = 3-methyl-2-oxobutanoate + H2O. The enzyme catalyses (2R,3R)-2,3-dihydroxy-3-methylpentanoate = (S)-3-methyl-2-oxopentanoate + H2O. It participates in amino-acid biosynthesis; L-isoleucine biosynthesis; L-isoleucine from 2-oxobutanoate: step 3/4. It functions in the pathway amino-acid biosynthesis; L-valine biosynthesis; L-valine from pyruvate: step 3/4. Its function is as follows. Functions in the biosynthesis of branched-chain amino acids. Catalyzes the dehydration of (2R,3R)-2,3-dihydroxy-3-methylpentanoate (2,3-dihydroxy-3-methylvalerate) into 2-oxo-3-methylpentanoate (2-oxo-3-methylvalerate) and of (2R)-2,3-dihydroxy-3-methylbutanoate (2,3-dihydroxyisovalerate) into 2-oxo-3-methylbutanoate (2-oxoisovalerate), the penultimate precursor to L-isoleucine and L-valine, respectively. In Acinetobacter baumannii (strain ATCC 17978 / DSM 105126 / CIP 53.77 / LMG 1025 / NCDC KC755 / 5377), this protein is Dihydroxy-acid dehydratase.